We begin with the raw amino-acid sequence, 264 residues long: Glutamate 5-kinase (264 aa).

Lysine 9 serves as a coordination point for ATP. Substrate-binding residues include serine 47, aspartate 132, and asparagine 144. Residues 164 to 165 (SD) and 206 to 212 (TGGIVTK) contribute to the ATP site.

It belongs to the glutamate 5-kinase family.

It localises to the cytoplasm. The catalysed reaction is L-glutamate + ATP = L-glutamyl 5-phosphate + ADP. The protein operates within amino-acid biosynthesis; L-proline biosynthesis; L-glutamate 5-semialdehyde from L-glutamate: step 1/2. Its function is as follows. Catalyzes the transfer of a phosphate group to glutamate to form L-glutamate 5-phosphate. The chain is Glutamate 5-kinase from Helicobacter hepaticus (strain ATCC 51449 / 3B1).